The following is a 331-amino-acid chain: tRNA N6-adenosine threonylcarbamoyltransferase (331 aa).

Fe cation-binding residues include His-108 and His-112. Substrate-binding positions include 129-133, Asp-161, Glu-178, and Ser-258; that span reads LVSGG. Fe cation is bound at residue Asp-286.

The protein belongs to the KAE1 / TsaD family. It depends on Fe(2+) as a cofactor.

It is found in the cytoplasm. It catalyses the reaction L-threonylcarbamoyladenylate + adenosine(37) in tRNA = N(6)-L-threonylcarbamoyladenosine(37) in tRNA + AMP + H(+). Required for the formation of a threonylcarbamoyl group on adenosine at position 37 (t(6)A37) in tRNAs that read codons beginning with adenine. Is probably involved in the transfer of the threonylcarbamoyl moiety of threonylcarbamoyl-AMP (TC-AMP) to the N6 group of A37. This chain is tRNA N6-adenosine threonylcarbamoyltransferase, found in Caldivirga maquilingensis (strain ATCC 700844 / DSM 13496 / JCM 10307 / IC-167).